A 1179-amino-acid chain; its full sequence is Protein turtle homolog A (1179 aa).

Residues 1–20 (MVWCLGLAVLSLVISQGADG) form the signal peptide. Residues 21 to 734 (RGKPEVVSVV…TQLPGLLPQP (714 aa)) are Extracellular-facing. Ig-like domains are found at residues 24–124 (PEVV…DFAN), 136–216 (PQFQ…GSAT), 226–318 (PPVI…AYLT), 322–410 (PAQV…SPVT), and 418–502 (PAFI…TNVY). Intrachain disulfides connect cysteine 41–cysteine 108, cysteine 158–cysteine 206, cysteine 248–cysteine 301, cysteine 344–cysteine 395, and cysteine 440–cysteine 486. N-linked (GlcNAc...) asparagine glycosylation is found at asparagine 188 and asparagine 256. Fibronectin type-III domains follow at residues 507–611 (SPHV…TTPA) and 623–718 (PLSP…TSGL). N-linked (GlcNAc...) asparagine glycosylation is found at asparagine 513 and asparagine 524. The interval 606–626 (LPTTPAAPGLPPTEIPPPLSP) is disordered. Residues 613–626 (PGLPPTEIPPPLSP) are compositionally biased toward pro residues. A helical membrane pass occupies residues 735–755 (VLAGVVGGVCFLGVAVLVSIL). Over 756–1179 (AGCLLNRRRA…VPHPEQATLL (424 aa)) the chain is Cytoplasmic. 3 disordered regions span residues 767-919 (RRRR…PLPG), 940-988 (DWPP…VVGA), and 1015-1079 (AAPR…KRRN). The segment covering 785-800 (GKSAAPSALGSGSPDS) has biased composition (low complexity). Serine 809 bears the Phosphoserine mark. Composition is skewed to pro residues over residues 826–836 (TPSPHPDPPSS) and 906–919 (VAPP…PLPG). The residue at position 972 (threonine 972) is a Phosphothreonine. Residues 1177–1179 (TLL) carry the PDZ-binding motif.

It belongs to the immunoglobulin superfamily. Turtle family. As to quaternary structure, interacts with MAGI2 and SHANK1.

Its subcellular location is the cell membrane. The protein localises to the synapse. Its function is as follows. Functions in dendrite outgrowth and synapse maturation. The sequence is that of Protein turtle homolog A (IGSF9) from Homo sapiens (Human).